A 396-amino-acid polypeptide reads, in one-letter code: Elongation factor Tu 1 (396 aa).

The 197-residue stretch at 10 to 206 (KPHCNIGTIG…AVDAYIPQPE (197 aa)) folds into the tr-type G domain. A G1 region spans residues 19–26 (GHVDHGKT). 19-26 (GHVDHGKT) contacts GTP. Thr26 is a binding site for Mg(2+). The tract at residues 60-64 (GITIS) is G2. Positions 81 to 84 (DCPG) are G3. Residues 81–85 (DCPGH) and 136–139 (NKCD) each bind GTP. Residues 136–139 (NKCD) are G4. Residues 174–176 (SAL) form a G5 region.

The protein belongs to the TRAFAC class translation factor GTPase superfamily. Classic translation factor GTPase family. EF-Tu/EF-1A subfamily. As to quaternary structure, monomer.

Its subcellular location is the cytoplasm. It carries out the reaction GTP + H2O = GDP + phosphate + H(+). Its function is as follows. GTP hydrolase that promotes the GTP-dependent binding of aminoacyl-tRNA to the A-site of ribosomes during protein biosynthesis. In Rhodopseudomonas palustris (strain BisB5), this protein is Elongation factor Tu 1.